We begin with the raw amino-acid sequence, 44 residues long: MRDLKTYLSVAPVASTLWFVALAGLLIEINRLFPDALTFPFFSF.

The chain crosses the membrane as a helical span at residues 7-27 (YLSVAPVASTLWFVALAGLLI).

This sequence belongs to the PsaJ family.

The protein localises to the plastid. Its subcellular location is the chloroplast thylakoid membrane. May help in the organization of the PsaE and PsaF subunits. The polypeptide is Photosystem I reaction center subunit IX (Cicer arietinum (Chickpea)).